The chain runs to 695 residues: L-type lectin-domain containing receptor kinase S.7 (695 aa).

Residues 1–23 (MPPRCRRLPLLFILLLAVRPLSA) form the signal peptide. Residues 24 to 331 (AAASSIAAAP…NHRRRHLFYK (308 aa)) are Extracellular-facing. The tract at residues 37 to 276 (YRRISWASNL…VERWTFRTFG (240 aa)) is legume-lectin like. 2 N-linked (GlcNAc...) asparagine glycosylation sites follow: asparagine 45 and asparagine 279. Positions 286–320 (PTKYIGPMPPNNQPLPPPPSPSPSPPPPSPPPPPH) are enriched in pro residues. Positions 286–323 (PTKYIGPMPPNNQPLPPPPSPSPSPPPPSPPPPPHPNH) are disordered. A helical membrane pass occupies residues 332 to 352 (VLGGVLGGMVLLGLVVVGSAV). Residues 353–695 (LLGRSVRRKN…TANTAFFSCR (343 aa)) are Cytoplasmic-facing. Position 376 is a phosphothreonine (threonine 376). Serine 378 is modified (phosphoserine). Residues threonine 386 and threonine 403 each carry the phosphothreonine modification. Residues 389 to 661 (FDSGNVIGVG…SMLDGTAPLI (273 aa)) form the Protein kinase domain. Residues 395–403 (IGVGGSGAT) and lysine 418 contribute to the ATP site. Catalysis depends on aspartate 514, which acts as the Proton acceptor. Threonine 657 is subject to Phosphothreonine.

The protein in the N-terminal section; belongs to the leguminous lectin family. In the C-terminal section; belongs to the protein kinase superfamily. Ser/Thr protein kinase family. As to quaternary structure, interacts with INP1. Interaction with INP1 is required for DAF1 polar localization at the future aperture sites in tetrads. Autophosphorylated at Thr-376; Ser-378; Thr-386; Thr-403 and Thr-657. In terms of tissue distribution, expressed in roots, leaves, lemma, palea, pistil and anthers.

It is found in the cell membrane. Its subcellular location is the cytoplasm. The protein resides in the cytosol. It catalyses the reaction L-seryl-[protein] + ATP = O-phospho-L-seryl-[protein] + ADP + H(+). The catalysed reaction is L-threonyl-[protein] + ATP = O-phospho-L-threonyl-[protein] + ADP + H(+). Legume-lectin receptor-like kinase required for normal pollen development and male fertility. Regulates pollen exine assembly and aperture development. Plays a critical role in annulus formation, and may participate in the formation of the fibrillar-granular layer underneath the operculum. May function by regulating the expression of genes involved in pollen exine development. Kinase activity is required for its function in pollen development. This chain is L-type lectin-domain containing receptor kinase S.7, found in Oryza sativa subsp. japonica (Rice).